Consider the following 239-residue polypeptide: ATP synthase subunit a (239 aa).

Helical transmembrane passes span 17–37 (GTVC…VYFF), 75–95 (FHLL…IGLI), 113–133 (DPFV…LFGV), 182–202 (LLTL…PLAI), and 206–226 (MVWI…FVTL).

Belongs to the ATPase A chain family. In terms of assembly, F-type ATPases have 2 components, CF(1) - the catalytic core - and CF(0) - the membrane proton channel. CF(1) has five subunits: alpha(3), beta(3), gamma(1), delta(1), epsilon(1). CF(0) has three main subunits: a(1), b(2) and c(9-12). The alpha and beta chains form an alternating ring which encloses part of the gamma chain. CF(1) is attached to CF(0) by a central stalk formed by the gamma and epsilon chains, while a peripheral stalk is formed by the delta and b chains.

The protein resides in the cell membrane. Functionally, key component of the proton channel; it plays a direct role in the translocation of protons across the membrane. In Enterococcus hirae (strain ATCC 9790 / DSM 20160 / JCM 8729 / LMG 6399 / NBRC 3181 / NCIMB 6459 / NCDO 1258 / NCTC 12367 / WDCM 00089 / R), this protein is ATP synthase subunit a.